Consider the following 255-residue polypeptide: Small ribosomal subunit protein uS2 (255 aa).

It belongs to the universal ribosomal protein uS2 family.

This chain is Small ribosomal subunit protein uS2 (rpsB), found in Streptococcus pyogenes serotype M1.